An 841-amino-acid chain; its full sequence is Protein translocase subunit SecA (841 aa).

ATP contacts are provided by residues glutamine 87, 105–109 (GEGKT), and aspartate 494. Residues cysteine 825, cysteine 827, cysteine 836, and cysteine 837 each contribute to the Zn(2+) site.

This sequence belongs to the SecA family. Monomer and homodimer. Part of the essential Sec protein translocation apparatus which comprises SecA, SecYEG and auxiliary proteins SecDF-YajC and YidC. Requires Zn(2+) as cofactor.

The protein resides in the cell inner membrane. Its subcellular location is the cytoplasm. It carries out the reaction ATP + H2O + cellular proteinSide 1 = ADP + phosphate + cellular proteinSide 2.. Functionally, part of the Sec protein translocase complex. Interacts with the SecYEG preprotein conducting channel. Has a central role in coupling the hydrolysis of ATP to the transfer of proteins into and across the cell membrane, serving as an ATP-driven molecular motor driving the stepwise translocation of polypeptide chains across the membrane. The chain is Protein translocase subunit SecA from Syntrophus aciditrophicus (strain SB).